The chain runs to 385 residues: Serine/threonine-protein kinase 52 (385 aa).

Residues 82–356 (LIIKTVLARG…PEMDEVVPML (275 aa)) form the Protein kinase domain. ATP-binding positions include 88 to 96 (LARGTFGTV) and Lys-109. The active-site Proton acceptor is the Asp-227.

The protein belongs to the protein kinase superfamily. Ser/Thr protein kinase family. In terms of assembly, binds to CBC1. Associates with PHOT1, PHOT2, BLUS1 and PM H(+)-ATPase (e.g. AHA1). In terms of processing, autophosphorylated. Phosphorylated by HT1 in response to low CO(2) concentrations. In terms of tissue distribution, expressed in guard cells.

The protein resides in the cytoplasm. It is found in the cytosol. The enzyme catalyses L-seryl-[protein] + ATP = O-phospho-L-seryl-[protein] + ADP + H(+). The catalysed reaction is L-threonyl-[protein] + ATP = O-phospho-L-threonyl-[protein] + ADP + H(+). Serine/threonine protein kinase that phosphorylates proteins on serine and threonine residues. Collectively with CBC1, acts as a negative regulator of stomatal opening, probably via the inhibition of plasma membrane-type ATPases (AHA1 and AHA2) activity in guard cells, but in an abscisic acid (ABA)-independent manner. However, at low concentrations of CO(2), together with CBC1, stimulates stomatal opening via the inhibition of S-type anion channels in response to blue light (BL) and red light (RL), thus being a key component to maximize photosynthesis in the light under low CO(2) conditions. Required for temperature decrease in leaves. Downstream target of HIGH LEAF TEMPERATURE1 (HT1) during low CO(2)-induced stomatal opening. This is Serine/threonine-protein kinase 52 from Arabidopsis thaliana (Mouse-ear cress).